Here is a 342-residue protein sequence, read N- to C-terminus: UDP-N-acetylenolpyruvoylglucosamine reductase (342 aa).

The FAD-binding PCMH-type domain occupies 13-183 (IDHCAKHIAC…VAVGLRLSKQ (171 aa)). R159 is an active-site residue. The Proton donor role is filled by S229. E325 is a catalytic residue.

Belongs to the MurB family. FAD serves as cofactor.

The protein localises to the cytoplasm. The catalysed reaction is UDP-N-acetyl-alpha-D-muramate + NADP(+) = UDP-N-acetyl-3-O-(1-carboxyvinyl)-alpha-D-glucosamine + NADPH + H(+). Its pathway is cell wall biogenesis; peptidoglycan biosynthesis. Functionally, cell wall formation. This Salmonella choleraesuis (strain SC-B67) protein is UDP-N-acetylenolpyruvoylglucosamine reductase.